A 139-amino-acid chain; its full sequence is Hydrogenase maturation factor HypA (139 aa).

His-2 provides a ligand contact to Ni(2+). Zn(2+) is bound by residues Cys-75, Cys-78, Cys-111, and Cys-114.

Belongs to the HypA/HybF family.

Functionally, involved in the maturation of [NiFe] hydrogenases. Required for nickel insertion into the metal center of the hydrogenase. The protein is Hydrogenase maturation factor HypA of Ignicoccus hospitalis (strain KIN4/I / DSM 18386 / JCM 14125).